A 353-amino-acid chain; its full sequence is Holliday junction branch migration complex subunit RuvB (353 aa).

The interval A4–Y186 is large ATPase domain (RuvB-L). ATP contacts are provided by residues I25, R26, G67, K70, T71, T72, E133–F135, R176, Y186, and R223. Position 71 (T71) interacts with Mg(2+). The segment at S187–D257 is small ATPAse domain (RuvB-S). The tract at residues E260–D353 is head domain (RuvB-H). Residues R296, R315, and R320 each contribute to the DNA site.

The protein belongs to the RuvB family. In terms of assembly, homohexamer. Forms an RuvA(8)-RuvB(12)-Holliday junction (HJ) complex. HJ DNA is sandwiched between 2 RuvA tetramers; dsDNA enters through RuvA and exits via RuvB. An RuvB hexamer assembles on each DNA strand where it exits the tetramer. Each RuvB hexamer is contacted by two RuvA subunits (via domain III) on 2 adjacent RuvB subunits; this complex drives branch migration. In the full resolvosome a probable DNA-RuvA(4)-RuvB(12)-RuvC(2) complex forms which resolves the HJ.

The protein localises to the cytoplasm. The catalysed reaction is ATP + H2O = ADP + phosphate + H(+). Its function is as follows. The RuvA-RuvB-RuvC complex processes Holliday junction (HJ) DNA during genetic recombination and DNA repair, while the RuvA-RuvB complex plays an important role in the rescue of blocked DNA replication forks via replication fork reversal (RFR). RuvA specifically binds to HJ cruciform DNA, conferring on it an open structure. The RuvB hexamer acts as an ATP-dependent pump, pulling dsDNA into and through the RuvAB complex. RuvB forms 2 homohexamers on either side of HJ DNA bound by 1 or 2 RuvA tetramers; 4 subunits per hexamer contact DNA at a time. Coordinated motions by a converter formed by DNA-disengaged RuvB subunits stimulates ATP hydrolysis and nucleotide exchange. Immobilization of the converter enables RuvB to convert the ATP-contained energy into a lever motion, pulling 2 nucleotides of DNA out of the RuvA tetramer per ATP hydrolyzed, thus driving DNA branch migration. The RuvB motors rotate together with the DNA substrate, which together with the progressing nucleotide cycle form the mechanistic basis for DNA recombination by continuous HJ branch migration. Branch migration allows RuvC to scan DNA until it finds its consensus sequence, where it cleaves and resolves cruciform DNA. The sequence is that of Holliday junction branch migration complex subunit RuvB from Pseudomonas fluorescens (strain Pf0-1).